We begin with the raw amino-acid sequence, 326 residues long: Putative ribose-phosphate pyrophosphokinase 2 (326 aa).

Residues 43 to 45 (DGE) and 102 to 103 (RQ) each bind ATP. H136 contributes to the Mg(2+) binding site. D-ribose 5-phosphate contacts are provided by residues D225 and 229 to 233 (NTGKT).

This sequence belongs to the ribose-phosphate pyrophosphokinase family. Class I subfamily. As to quaternary structure, homohexamer. Mg(2+) serves as cofactor.

The protein localises to the cytoplasm. The enzyme catalyses D-ribose 5-phosphate + ATP = 5-phospho-alpha-D-ribose 1-diphosphate + AMP + H(+). It participates in metabolic intermediate biosynthesis; 5-phospho-alpha-D-ribose 1-diphosphate biosynthesis; 5-phospho-alpha-D-ribose 1-diphosphate from D-ribose 5-phosphate (route I): step 1/1. In terms of biological role, involved in the biosynthesis of the central metabolite phospho-alpha-D-ribosyl-1-pyrophosphate (PRPP) via the transfer of pyrophosphoryl group from ATP to 1-hydroxyl of ribose-5-phosphate (Rib-5-P). This Streptococcus pyogenes serotype M18 (strain MGAS8232) protein is Putative ribose-phosphate pyrophosphokinase 2.